The primary structure comprises 96 residues: NADH-ubiquinone oxidoreductase chain 4L (96 aa).

The next 3 membrane-spanning stretches (helical) occupy residues 2–22 (IMILYWSLPMILFILGLFCFV), 28–48 (LLSMLLSLEFIVLMLFFMLFI), and 62–82 (MFLTFSVCEGALGLSILVSMI).

It belongs to the complex I subunit 4L family.

The protein resides in the mitochondrion membrane. It carries out the reaction a ubiquinone + NADH + 5 H(+)(in) = a ubiquinol + NAD(+) + 4 H(+)(out). Core subunit of the mitochondrial membrane respiratory chain NADH dehydrogenase (Complex I) that is believed to belong to the minimal assembly required for catalysis. Complex I functions in the transfer of electrons from NADH to the respiratory chain. The immediate electron acceptor for the enzyme is believed to be ubiquinone. The polypeptide is NADH-ubiquinone oxidoreductase chain 4L (mt:ND4L) (Drosophila melanogaster (Fruit fly)).